The sequence spans 22 residues: Proline-rich peptide (22 aa).

Residues 1–22 are disordered; it reads FVDRNRIPRSNNGPKIPIISNP.

It is found in the secreted. In terms of biological role, antibacterial peptide active against Gram-positive bacterium M.luteus and Gram-negative bacterium E.coli. The protein is Proline-rich peptide of Calliphora vicina (Blue blowfly).